Consider the following 170-residue polypeptide: Zinc finger matrin-type protein 5 (170 aa).

The C3H1-type zinc finger occupies 51-79; the sequence is EQNKRPCRKFLLTGQCDFGSNCRFSHMSE. Residues 150–170 are disordered; the sequence is PPSLRAPPPGGWPLQPSVQWG.

Component of the U11/U12 snRNPs that are part of the U12-type spliceosome.

It is found in the nucleus. The protein is Zinc finger matrin-type protein 5 (ZMAT5) of Bos taurus (Bovine).